We begin with the raw amino-acid sequence, 357 residues long: tRNA-specific 2-thiouridylase MnmA (357 aa).

ATP contacts are provided by residues 3 to 10 (AMSGGVDS) and Leu-29. The active-site Nucleophile is Cys-98. A disulfide bond links Cys-98 and Cys-196. Residue Gly-122 coordinates ATP. The interaction with tRNA stretch occupies residues 146–148 (KDQ). Cys-196 (cysteine persulfide intermediate) is an active-site residue. The interval 302-303 (RY) is interaction with tRNA.

Belongs to the MnmA/TRMU family.

The protein localises to the cytoplasm. It carries out the reaction S-sulfanyl-L-cysteinyl-[protein] + uridine(34) in tRNA + AH2 + ATP = 2-thiouridine(34) in tRNA + L-cysteinyl-[protein] + A + AMP + diphosphate + H(+). Functionally, catalyzes the 2-thiolation of uridine at the wobble position (U34) of tRNA, leading to the formation of s(2)U34. The polypeptide is tRNA-specific 2-thiouridylase MnmA (Moorella thermoacetica (strain ATCC 39073 / JCM 9320)).